The following is a 1009-amino-acid chain: Regulator of telomere elongation helicase 1 homolog (1009 aa).

In terms of domain architecture, Helicase ATP-binding spans 7-322 (AGIPVHFPFE…KEMLLELEKA (316 aa)). 42-49 (SPTGTGKT) provides a ligand contact to ATP. Positions 146, 164, 173, and 209 each coordinate [4Fe-4S] cluster. A DEAH box motif is present at residues 252-255 (DEAH).

It belongs to the helicase family. RAD3/XPD subfamily.

The protein resides in the nucleus. The enzyme catalyses ATP + H2O = ADP + phosphate + H(+). Its function is as follows. A probable ATP-dependent DNA helicase implicated in DNA repair and the maintenance of genomic stability. Acts as an anti-recombinase to counteract toxic recombination and limit crossover during meiosis. Regulates meiotic recombination and crossover homeostasis by physically dissociating strand invasion events and thereby promotes noncrossover repair by meiotic synthesis dependent strand annealing (SDSA) as well as disassembly of D loop recombination intermediates. In Drosophila persimilis (Fruit fly), this protein is Regulator of telomere elongation helicase 1 homolog.